The following is a 505-amino-acid chain: L-carnitine/gamma-butyrobetaine antiporter (505 aa).

12 consecutive transmembrane segments (helical) span residues 10-30 (IEPK…WLTV), 51-71 (WGWA…WLVF), 92-112 (IFMM…SIEI), 143-163 (GPLP…FFFV), 195-215 (FYLV…TPLV), 231-251 (LDAI…ACGL), 263-283 (SYLS…SFIM), 316-336 (WTVF…IFLA), 347-367 (LCFG…TVLG), 403-423 (LSTA…VTLI), 446-466 (LLVR…LLAL), and 475-495 (AIIA…LSFI).

This sequence belongs to the BCCT transporter (TC 2.A.15) family. CaiT subfamily. Homotrimer.

It localises to the cell inner membrane. It catalyses the reaction 4-(trimethylamino)butanoate(in) + (R)-carnitine(out) = 4-(trimethylamino)butanoate(out) + (R)-carnitine(in). The protein operates within amine and polyamine metabolism; carnitine metabolism. Functionally, catalyzes the exchange of L-carnitine for gamma-butyrobetaine. The chain is L-carnitine/gamma-butyrobetaine antiporter from Salmonella gallinarum (strain 287/91 / NCTC 13346).